The following is a 766-amino-acid chain: FYVE, RhoGEF and PH domain-containing protein 4 (766 aa).

The interval 1 to 150 (MEESNPAPTS…SSVTNSHDEN (150 aa)) is actin filament-binding. Composition is skewed to polar residues over residues 43 to 65 (STMN…TPQK), 132 to 145 (RNET…SVTN), and 152 to 161 (CDSSCRTQGT). Positions 43 to 167 (STMNLNIPQT…TQGTDLGLPS (125 aa)) are disordered. The 188-residue stretch at 206 to 393 (KLHKIATELL…STAASHSNSA (188 aa)) folds into the DH domain. Positions 422–521 (ELIKEGQILK…WIKALQESID (100 aa)) constitute a PH 1 domain. The FYVE-type zinc finger occupies 559–619 (DNEVTMCMKC…VCKDCYQIMS (61 aa)). Zn(2+) contacts are provided by Cys-565, Cys-568, Cys-582, Cys-585, Cys-590, Cys-593, Cys-611, and Cys-614. The region spanning 643 to 740 (NSEVCSFLQY…WLKIILLAVT (98 aa)) is the PH 2 domain. Phosphoserine occurs at positions 702 and 716. The segment at 745–766 (DGPSEHLDTLDNLPGPKEKSEC) is disordered.

As to quaternary structure, homooligomer. Detected in brain, lung, liver, skeletal muscle, kidney, testis and cultured hippocampal neurons.

It is found in the cytoplasm. Its subcellular location is the cytoskeleton. The protein localises to the cell projection. It localises to the filopodium. Functionally, activates CDC42, a member of the Ras-like family of Rho- and Rac proteins, by exchanging bound GDP for free GTP. Plays a role in regulating the actin cytoskeleton and cell shape. Activates MAPK8. In Rattus norvegicus (Rat), this protein is FYVE, RhoGEF and PH domain-containing protein 4 (Fgd4).